A 730-amino-acid chain; its full sequence is Regulatory factor X 4 (730 aa).

Over residues 30–41 the composition is skewed to polar residues; that stretch reads YSSHTSLGNISN. The tract at residues 30 to 59 is disordered; the sequence is YSSHTSLGNISNDETDEEKENRASKPHSTP. The RFX-type winged-helix DNA-binding region spans 61–136; it reads TLQWLGENYE…YHYYGIAVKE (76 aa). The tract at residues 500–532 is disordered; the sequence is EPAISTPSPVPFSPAASSSSVEIPSATSPVSNQ. Low complexity predominate over residues 512 to 528; sequence SPAASSSSVEIPSATSP.

The protein belongs to the RFX family.

It localises to the nucleus. Its function is as follows. Required for neural tube ciliogenesis during embryogenesis. This Xenopus laevis (African clawed frog) protein is Regulatory factor X 4.